A 419-amino-acid chain; its full sequence is Peptide chain release factor subunit 1 (419 aa).

The protein belongs to the eukaryotic release factor 1 family. As to quaternary structure, heterodimer of two subunits, one of which binds GTP.

The protein resides in the cytoplasm. Its function is as follows. Directs the termination of nascent peptide synthesis (translation) in response to the termination codons UAA, UAG and UGA. The chain is Peptide chain release factor subunit 1 from Methanococcus maripaludis (strain C5 / ATCC BAA-1333).